The sequence spans 209 residues: uncharacterized protein (209 aa).

Residues 1 to 199 form the FCP1 homology domain; sequence MQVFLDLDET…DELKRVTASL (199 aa).

This is an uncharacterized protein from Dryophytes versicolor (chameleon treefrog).